A 342-amino-acid chain; its full sequence is tRNA-specific 2-thiouridylase MnmA (342 aa).

Residues 6–13 (LLSGGVDS) and Leu32 each bind ATP. Cys92 functions as the Nucleophile in the catalytic mechanism. A disulfide bond links Cys92 and Cys191. Gly116 is an ATP binding site. Residues 138–140 (KDQ) are interaction with tRNA. Catalysis depends on Cys191, which acts as the Cysteine persulfide intermediate. The interval 293–294 (RY) is interaction with tRNA.

The protein belongs to the MnmA/TRMU family.

Its subcellular location is the cytoplasm. It catalyses the reaction S-sulfanyl-L-cysteinyl-[protein] + uridine(34) in tRNA + AH2 + ATP = 2-thiouridine(34) in tRNA + L-cysteinyl-[protein] + A + AMP + diphosphate + H(+). In terms of biological role, catalyzes the 2-thiolation of uridine at the wobble position (U34) of tRNA, leading to the formation of s(2)U34. This Helicobacter pylori (strain ATCC 700392 / 26695) (Campylobacter pylori) protein is tRNA-specific 2-thiouridylase MnmA.